The sequence spans 1460 residues: DNA-binding protein RFX7 (1460 aa).

Residues 1–34 (MAEEQQQPPPQQPDAHQQLPPSAPNSGVALPALV) are disordered. A DNA-binding region (RFX-type winged-helix) is located at residues 108–183 (AFSWIRNTLE…YCYSGLRKKA (76 aa)). Residues 188 to 193 (PTLPNL) carry the PxLPxI/L motif; mediates interaction with ANKRA2 and RFXANK motif. Positions 308 to 352 (QRKIQKKQQEQKLQSPLPGESAAKKSESATSNGVTNLPNGNPSIL) are disordered. At serine 322 the chain carries Phosphoserine. Residues 337–352 (TSNGVTNLPNGNPSIL) are compositionally biased toward polar residues. Serine 379 is subject to Phosphoserine. Polar residues predominate over residues 404 to 416 (SVKQAPKTPQNVP). A disordered region spans residues 404 to 428 (SVKQAPKTPQNVPASPGGDRSARHR). Phosphoserine is present on residues serine 418 and serine 455. Residues 481-513 (TPSNSNTPLKHSASVSSATGTTEESRSVPQIKN) are compositionally biased toward polar residues. 3 disordered regions span residues 481-585 (TPSN…PSNE), 632-715 (TFTS…AQIP), and 917-1015 (QSVT…SVPP). Positions 515–535 (SVVSLQSPGSRSSSAGGTSAV) are enriched in low complexity. Over residues 537–549 (VKVEPETSSDEHP) the composition is skewed to basic and acidic residues. 2 stretches are compositionally biased toward polar residues: residues 563–583 (QTPS…QKPS) and 632–644 (TFTS…NGDS). A Phosphothreonine modification is found at threonine 564. Serine 662 is modified (phosphoserine). An N6-acetyllysine modification is found at lysine 704. Composition is skewed to polar residues over residues 705–715 (TEGSTAGAQIP) and 917–933 (QSVT…SSTH). Residues 947-963 (TPTPTPTPTPTPTPTPT) show a composition bias toward pro residues. The segment covering 971–1009 (GSQSLSRESPCSRLAQTTPVDSALGSSRHTPIGTPHSNC) has biased composition (polar residues). At threonine 988 the chain carries Phosphothreonine. A phosphoserine mark is found at serine 1178 and serine 1329.

This sequence belongs to the RFX family. In terms of assembly, interacts (via PxLPxI/L motif) with RFXANK (via ankyrin repeats). Interacts (via PxLPxI/L motif) with ANKRA2 (via ankyrin repeats). Widely expressed in many different tissue types including thymus and placenta, with high expression in brain. Expressed in both inhibitory and excitatory neurons in cortex.

The protein resides in the nucleus. Functionally, transcription factor. Acts as a transcriptional activator by binding to promoter regions of target genes, such as PDCD4, PIK3IP1, MXD4, PNRC1, and RFX5. Plays a role in natural killer (NK) cell maintenance and immunity. May play a role in the process of ciliogenesis in the neural tube and neural tube closure. This is DNA-binding protein RFX7 from Homo sapiens (Human).